A 1258-amino-acid chain; its full sequence is Cohesin subunit SA-1 (1258 aa).

The segment at Met1–Arg59 is disordered. Residues Gln10–His19 are compositionally biased toward polar residues. The residue at position 24 (Ser24) is a Phosphoserine. One can recognise an SCD domain in the interval Phe296–Met381. Phosphoserine is present on residues Ser756, Ser1062, and Ser1065. The disordered stretch occupies residues Gly1055 to His1148. Residues Ser1062–Val1075 show a composition bias toward low complexity. Residues Arg1076–Lys1087 show a composition bias toward basic residues. Phosphoserine is present on Ser1093. The segment covering Asp1095 to Ile1106 has biased composition (polar residues). Positions Glu1137 to Phe1146 are enriched in basic and acidic residues. Lys1161 participates in a covalent cross-link: Glycyl lysine isopeptide (Lys-Gly) (interchain with G-Cter in SUMO2).

It belongs to the SCC3 family. In terms of assembly, cohesin complexes are composed of a heterodimer between a SMC1 protein (SMC1A or SMC1B) and SMC3, which are attached via their hinge domain, and RAD21 which link them at their heads, and one STAG protein (STAG1, STAG2 or STAG3). In cohesin complexes, STAG1 is mutually exclusive with STAG2 and STAG3. Interacts directly with RAD21 in cohesin complex. The cohesin complex interacts with the cohesin loading complex subunits NIPBL/Scc2 (via HEAT repeats) and MAU2/Scc4. NIPBL directly contacts all members of the complex, RAD21, SMC1A/B, SMC3 and STAG1. Post-translationally, phosphorylated by PLK1. The large dissociation of cohesin from chromosome arms during prophase is partly due to its phosphorylation.

The protein resides in the nucleus. Its subcellular location is the chromosome. Functionally, component of cohesin complex, a complex required for the cohesion of sister chromatids after DNA replication. The cohesin complex apparently forms a large proteinaceous ring within which sister chromatids can be trapped. At anaphase, the complex is cleaved and dissociates from chromatin, allowing sister chromatids to segregate. The cohesin complex may also play a role in spindle pole assembly during mitosis. The protein is Cohesin subunit SA-1 (Stag1) of Mus musculus (Mouse).